Here is a 244-residue protein sequence, read N- to C-terminus: Protein-lysine methyltransferase METTL21E (244 aa).

Residues 1–20 (MDLTVTHITHKETYKEPRDD) form a disordered region. Residues 9–18 (THKETYKEPR) show a composition bias toward basic and acidic residues. S-adenosyl-L-methionine contacts are provided by residues tryptophan 69, 97–99 (GAG), aspartate 118, tryptophan 149, and alanine 170.

Belongs to the methyltransferase superfamily. METTL21 family.

Its function is as follows. Protein-lysine methyltransferase. This Mus musculus (Mouse) protein is Protein-lysine methyltransferase METTL21E (Mettl21e).